The primary structure comprises 94 residues: Aspartyl/glutamyl-tRNA(Asn/Gln) amidotransferase subunit C (94 aa).

Belongs to the GatC family. Heterotrimer of A, B and C subunits.

The catalysed reaction is L-glutamyl-tRNA(Gln) + L-glutamine + ATP + H2O = L-glutaminyl-tRNA(Gln) + L-glutamate + ADP + phosphate + H(+). It catalyses the reaction L-aspartyl-tRNA(Asn) + L-glutamine + ATP + H2O = L-asparaginyl-tRNA(Asn) + L-glutamate + ADP + phosphate + 2 H(+). Functionally, allows the formation of correctly charged Asn-tRNA(Asn) or Gln-tRNA(Gln) through the transamidation of misacylated Asp-tRNA(Asn) or Glu-tRNA(Gln) in organisms which lack either or both of asparaginyl-tRNA or glutaminyl-tRNA synthetases. The reaction takes place in the presence of glutamine and ATP through an activated phospho-Asp-tRNA(Asn) or phospho-Glu-tRNA(Gln). This Desulfitobacterium hafniense (strain DSM 10664 / DCB-2) protein is Aspartyl/glutamyl-tRNA(Asn/Gln) amidotransferase subunit C.